A 624-amino-acid polypeptide reads, in one-letter code: DNA mismatch repair protein MutL (624 aa).

Residues 340–355 are compositionally biased toward basic and acidic residues; that stretch reads NKLDTDSHSQSHERGH. The interval 340–415 is disordered; the sequence is NKLDTDSHSQ…RGGATSSYRQ (76 aa). 2 stretches are compositionally biased toward polar residues: residues 372–383 and 391–415; these read HQTAPSTKASTE and SPIS…SYRQ.

The protein belongs to the DNA mismatch repair MutL/HexB family.

In terms of biological role, this protein is involved in the repair of mismatches in DNA. It is required for dam-dependent methyl-directed DNA mismatch repair. May act as a 'molecular matchmaker', a protein that promotes the formation of a stable complex between two or more DNA-binding proteins in an ATP-dependent manner without itself being part of a final effector complex. The chain is DNA mismatch repair protein MutL from Shewanella sediminis (strain HAW-EB3).